Reading from the N-terminus, the 122-residue chain is UPF0231 protein VV1_1657 (122 aa).

Belongs to the UPF0231 family.

The polypeptide is UPF0231 protein VV1_1657 (Vibrio vulnificus (strain CMCP6)).